Consider the following 425-residue polypeptide: UDP-N-acetylglucosamine 1-carboxyvinyltransferase (425 aa).

31 to 32 (KN) is a phosphoenolpyruvate binding site. Arg-100 contacts UDP-N-acetyl-alpha-D-glucosamine. Cys-124 functions as the Proton donor in the catalytic mechanism. Position 124 is a 2-(S-cysteinyl)pyruvic acid O-phosphothioketal (Cys-124). Residues 129 to 133 (RPIDQ), 170 to 172 (TVT), Asp-311, and Ile-333 each bind UDP-N-acetyl-alpha-D-glucosamine.

Belongs to the EPSP synthase family. MurA subfamily.

Its subcellular location is the cytoplasm. The enzyme catalyses phosphoenolpyruvate + UDP-N-acetyl-alpha-D-glucosamine = UDP-N-acetyl-3-O-(1-carboxyvinyl)-alpha-D-glucosamine + phosphate. Its pathway is cell wall biogenesis; peptidoglycan biosynthesis. Functionally, cell wall formation. Adds enolpyruvyl to UDP-N-acetylglucosamine. This Aquifex aeolicus (strain VF5) protein is UDP-N-acetylglucosamine 1-carboxyvinyltransferase.